The chain runs to 291 residues: 4-hydroxy-tetrahydrodipicolinate synthase (291 aa).

Pyruvate is bound at residue Thr-45. Tyr-131 (proton donor/acceptor) is an active-site residue. Catalysis depends on Lys-159, which acts as the Schiff-base intermediate with substrate. Ile-202 lines the pyruvate pocket.

Belongs to the DapA family. As to quaternary structure, homotetramer; dimer of dimers.

The protein resides in the cytoplasm. The catalysed reaction is L-aspartate 4-semialdehyde + pyruvate = (2S,4S)-4-hydroxy-2,3,4,5-tetrahydrodipicolinate + H2O + H(+). It functions in the pathway amino-acid biosynthesis; L-lysine biosynthesis via DAP pathway; (S)-tetrahydrodipicolinate from L-aspartate: step 3/4. Catalyzes the condensation of (S)-aspartate-beta-semialdehyde [(S)-ASA] and pyruvate to 4-hydroxy-tetrahydrodipicolinate (HTPA). The protein is 4-hydroxy-tetrahydrodipicolinate synthase of Methanococcoides burtonii (strain DSM 6242 / NBRC 107633 / OCM 468 / ACE-M).